A 637-amino-acid chain; its full sequence is Probable membrane transporter protein MamO (637 aa).

Residues M1–K24 lie on the Cytoplasmic side of the membrane. The helical transmembrane segment at T25–L45 threads the bilayer. The Lumenal portion of the chain corresponds to D46–D352. Residues L78–V268 are protease-like. H148 and H263 together coordinate a divalent metal cation. A helical membrane pass occupies residues I353–G373. The interval M370–V637 is TSUP-like. Topologically, residues G374 to Q378 are cytoplasmic. Residues V379–L399 traverse the membrane as a helical segment. The Lumenal portion of the chain corresponds to T400–Q416. A helical membrane pass occupies residues L417–G437. A topological domain (cytoplasmic) is located at residue Y438. A helical transmembrane segment spans residues F439–I459. Topologically, residues M460–S517 are lumenal. Residues A518–I538 form a helical membrane-spanning segment. Residues E539–A554 lie on the Cytoplasmic side of the membrane. Residues I555–L575 traverse the membrane as a helical segment. The Lumenal segment spans residues H576–E586. Residues A587–A607 traverse the membrane as a helical segment. The Cytoplasmic segment spans residues R608–R616. Residues V617–V637 traverse the membrane as a helical segment.

The protein in the N-terminal section; belongs to the peptidase S1C family. This sequence in the C-terminal section; belongs to the 4-toluene sulfonate uptake permease (TSUP) (TC 2.A.102) family. A metal cation serves as cofactor. In terms of processing, subject to proteolytic cleavage by MamE.

Its subcellular location is the magnetosome membrane. Plays 2 roles; promotes magnetite nucleation/formation and activates the MamE protease. Despite its near conservation of a protease-like sequence, this is probably not a protease. Required in conjunction with MamP for proteolysis of at least MamE, itself and MamP. May transport a solute that controls MamE's protease activity. May place individual iron atoms into the magnetite lattice. This Paramagnetospirillum magneticum (strain ATCC 700264 / AMB-1) (Magnetospirillum magneticum) protein is Probable membrane transporter protein MamO (mamO).